The following is a 40-amino-acid chain: Small polypeptide DEVIL 3 (40 aa).

Residues 9-40 are required for DVL/RTFL small polypeptide activity; that stretch reads PCNKKLGGYLKEQKGRLYIIRRCVVMLICWHD. The helical transmembrane segment at 12 to 28 threads the bilayer; that stretch reads KKLGGYLKEQKGRLYII.

The protein belongs to the DVL/RTFL small polypeptides family. In terms of tissue distribution, mostly expressed in flowers and stems, and, to a lower extent, in roots and leaves.

Its subcellular location is the cell membrane. Its function is as follows. Small polypeptide acting as a regulatory molecule which coordinates cellular responses required for differentiation, growth and development, including leaves shape, pedicule elongation, inflorescence organization and fruit maturation, probably by restricting polar cell proliferation in lateral organs and coordinating socket cell recruitment and differentiation at trichome sites. The sequence is that of Small polypeptide DEVIL 3 from Arabidopsis thaliana (Mouse-ear cress).